A 495-amino-acid chain; its full sequence is D-hydantoinase/dihydropyrimidinase (495 aa).

3 residues coordinate Zn(2+): H59, H61, and K150. K150 is subject to N6-carboxylysine. Y155 provides a ligand contact to substrate. Residues H183 and H239 each contribute to the Zn(2+) site. Residue S289 participates in substrate binding. D316 serves as a coordination point for Zn(2+). N337 provides a ligand contact to substrate.

Belongs to the metallo-dependent hydrolases superfamily. Hydantoinase/dihydropyrimidinase family. Homotetramer. The cofactor is Zn(2+). In terms of processing, carboxylation allows a single lysine to coordinate two zinc ions.

The enzyme catalyses 5,6-dihydrouracil + H2O = 3-(carbamoylamino)propanoate + H(+). Its function is as follows. Catalyzes the hydrolysis of dihydropyrimidines and of the structurally related DL-5-mono-substituted hydantoins, to produce N-carbamoyl-D-amino acids. In Pseudomonas putida (Arthrobacter siderocapsulatus), this protein is D-hydantoinase/dihydropyrimidinase.